A 464-amino-acid chain; its full sequence is MKIELAKTEIIHFVGIGGIGMSGLALIMKRMGFNVQGSDVLGNKNIERLKKDKIKITISHTKKNIAKATIVVISSAIKNNNPELIEAKLKQLPIYKRGEMLANIVSLTKNIVVTGSHGKTTTTSLLASIFSKTKLDPTIINGGVLNAIKNSAKLGKSDWCILEADESDGSFIHVPPTYSIVTNIDREHMDFYNSMKDLKELFIKFINKVPSFGKSFICIDDKNNKDLLSKLKMKNYYTYGTDNKSNFYIKNIKQEKEYSQYDLAINLPGKKNLTIRKIKLPLLGIHNIRNSTAAIAVAVTIGISQNIIKKGLKEFKGVQRRFNKIFTHRETNFYDDYAHHPTEIREVLNGVRAAYKNEEVICIFQPHRISRLKDLKKEFSLSFKKADVVILCPIYTAGEKIKLGFKYNNFAKDIVKNSKVRLFMVEDQYQLAKFIKNTIFGKKIVVGMGAGTISAWMRQLPELI.

115 to 121 (GSHGKTT) is a binding site for ATP.

It belongs to the MurCDEF family.

It localises to the cytoplasm. It carries out the reaction UDP-N-acetyl-alpha-D-muramate + L-alanine + ATP = UDP-N-acetyl-alpha-D-muramoyl-L-alanine + ADP + phosphate + H(+). It participates in cell wall biogenesis; peptidoglycan biosynthesis. Cell wall formation. This chain is UDP-N-acetylmuramate--L-alanine ligase, found in Pelagibacter ubique (strain HTCC1062).